The sequence spans 114 residues: Superoxide dismutase [Cu-Zn] (114 aa).

Residues His37, His39, and His54 each contribute to the Cu cation site. The tract at residues 48–68 (CMSSGPHFNPRNKEHGAPTDE) is disordered. Positions 54, 62, 71, and 74 each coordinate Zn(2+). Over residues 58–68 (RNKEHGAPTDE) the composition is skewed to basic and acidic residues. Residue His111 coordinates Cu cation.

This sequence belongs to the Cu-Zn superoxide dismutase family. In terms of assembly, homodimer. Requires Cu cation as cofactor. Zn(2+) is required as a cofactor.

The protein resides in the cytoplasm. It catalyses the reaction 2 superoxide + 2 H(+) = H2O2 + O2. Its function is as follows. Destroys radicals which are normally produced within the cells and which are toxic to biological systems. This chain is Superoxide dismutase [Cu-Zn], found in Drosophila miranda (Fruit fly).